We begin with the raw amino-acid sequence, 253 residues long: Phosphoribosylaminoimidazole-succinocarboxamide synthase (253 aa).

It belongs to the SAICAR synthetase family.

It carries out the reaction 5-amino-1-(5-phospho-D-ribosyl)imidazole-4-carboxylate + L-aspartate + ATP = (2S)-2-[5-amino-1-(5-phospho-beta-D-ribosyl)imidazole-4-carboxamido]succinate + ADP + phosphate + 2 H(+). It participates in purine metabolism; IMP biosynthesis via de novo pathway; 5-amino-1-(5-phospho-D-ribosyl)imidazole-4-carboxamide from 5-amino-1-(5-phospho-D-ribosyl)imidazole-4-carboxylate: step 1/2. The sequence is that of Phosphoribosylaminoimidazole-succinocarboxamide synthase from Dinoroseobacter shibae (strain DSM 16493 / NCIMB 14021 / DFL 12).